Consider the following 403-residue polypeptide: Ribonuclease T2-like (403 aa).

Positions M1–C19 are cleaved as a signal peptide. Intrachain disulfides connect C36-C55, C44-C91, C54-C158, and C99-C150. N78 is a glycosylation site (N-linked (GlcNAc...) asparagine). Residues H84, E143, and H147 contribute to the active site. N175 carries N-linked (GlcNAc...) asparagine glycosylation. The cysteines at positions 224 and 259 are disulfide-linked. A disordered region spans residues P268–E288.

The protein belongs to the RNase T2 family.

It is found in the vacuole lumen. The protein resides in the cytoplasm. The catalysed reaction is a ribonucleotidyl-ribonucleotide-RNA + H2O = a 3'-end 3'-phospho-ribonucleotide-RNA + a 5'-end dephospho-ribonucleoside-RNA + H(+). Functionally, rnase which modulates cell survival under stress conditions. Released from the vacuole to the cytoplasm during stress to promote tRNA and rRNA cleavage and to activate separately a downstream pathway that promotes cell death. Involved in cell size, vacuolar morphology and growth at high temperatures and high salt concentration. This Debaryomyces hansenii (strain ATCC 36239 / CBS 767 / BCRC 21394 / JCM 1990 / NBRC 0083 / IGC 2968) (Yeast) protein is Ribonuclease T2-like (RNY1).